The primary structure comprises 461 residues: Isthmin-1 (461 aa).

A signal peptide spans 1–26 (MVRLAAELLLLLGLLLLTLHITVLRS). Asn-33 carries N-linked (GlcNAc...) asparagine glycosylation. Over residues 40–58 (QDSRVAENNVNADSSSSVQ) the composition is skewed to polar residues. 3 disordered regions span residues 40-62 (QDSR…LGPG), 73-92 (ASQP…RDGP), and 128-188 (EGSE…NFLK). A compositionally biased stretch (basic and acidic residues) spans 131 to 141 (EPEKGMRKENK). The segment covering 156-165 (SSSSSSSSVS) has biased composition (low complexity). Residues 215–259 (DGEGDWSAWSPCSVSCGNGNQKRTRSCGYACTATESRTCDMPSCP) form the TSP type-1 domain. Disulfide bonds link Cys-226-Cys-253, Cys-230-Cys-258, and Cys-241-Cys-245. Residue Asn-282 is glycosylated (N-linked (GlcNAc...) asparagine). The 164-residue stretch at 286 to 449 (LFGVDTDSCE…QKCAENPQDE (164 aa)) folds into the AMOP domain.

This sequence belongs to the isthmin family.

Its subcellular location is the secreted. In terms of biological role, may specifically influence certain angiogenesis process. The protein is Isthmin-1 (ism1) of Danio rerio (Zebrafish).